We begin with the raw amino-acid sequence, 1238 residues long: DNA-directed RNA polymerase subunit beta (1238 aa).

The protein belongs to the RNA polymerase beta chain family. The RNAP catalytic core consists of 2 alpha, 1 beta, 1 beta' and 1 omega subunit. When a sigma factor is associated with the core the holoenzyme is formed, which can initiate transcription.

It carries out the reaction RNA(n) + a ribonucleoside 5'-triphosphate = RNA(n+1) + diphosphate. DNA-dependent RNA polymerase catalyzes the transcription of DNA into RNA using the four ribonucleoside triphosphates as substrates. The polypeptide is DNA-directed RNA polymerase subunit beta (Clostridioides difficile (strain 630) (Peptoclostridium difficile)).